The sequence spans 305 residues: Heme A synthase (305 aa).

The Cytoplasmic segment spans residues 1–6 (MKKFLK). The chain crosses the membrane as a helical span at residues 7–27 (VWSVLTIICMTVVVFGGALVT). Residues 28–63 (KTGSADGCGNSWPLCNGQLVRLTDVTPEKLIEFMHR) lie on the Extracellular side of the membrane. Cysteines 35 and 42 form a disulfide. Glu59 is a catalytic residue. His62 is a binding site for heme o. The chain crosses the membrane as a helical span at residues 64–84 (MTTGISSIFVIVLAICAWIYM). Topologically, residues 85 to 92 (KNRRETKP) are cytoplasmic. A helical transmembrane segment spans residues 93–113 (LAIIAVLFLIIQALMGMAAVV). Residues 114–122 (WGQNPYIMA) lie on the Extracellular side of the membrane. Residues 123–143 (LHFGISIICYASIVLLALMIF) traverse the membrane as a helical segment. His124 serves as a coordination point for heme o. Topologically, residues 144–160 (EVDRKFDARNLVMGTKL) are cytoplasmic. A helical transmembrane segment spans residues 161–181 (RINIYALTIYTYLAVYTGALV). Residues 182-212 (RHEKASMAVPVWPFENGKFIMPDSVQDYVQY) lie on the Extracellular side of the membrane. Residues 213–233 (FHRVAAFILIVWLLYVTWLVF) traverse the membrane as a helical segment. His214 is a heme b binding site. The Cytoplasmic segment spans residues 234 to 240 (RDYRRYR). The helical transmembrane segment at 241-261 (VLTFSMVLSLLFIALQAVTGA) threads the bilayer. Residues 262–271 (LSVYTGVNLY) lie on the Extracellular side of the membrane. A helical transmembrane segment spans residues 272-292 (IALAHSLIITMLFALLCYLCL). His276 provides a ligand contact to heme b. Residues 293-305 (LASRSKSNRLRIK) are Cytoplasmic-facing.

Belongs to the COX15/CtaA family. Type 1 subfamily. In terms of assembly, interacts with CtaB. Requires heme b as cofactor.

It is found in the cell membrane. The enzyme catalyses Fe(II)-heme o + 2 A + H2O = Fe(II)-heme a + 2 AH2. The protein operates within porphyrin-containing compound metabolism; heme A biosynthesis; heme A from heme O: step 1/1. Catalyzes the conversion of heme O to heme A by two successive hydroxylations of the methyl group at C8. The first hydroxylation forms heme I, the second hydroxylation results in an unstable dihydroxymethyl group, which spontaneously dehydrates, resulting in the formyl group of heme A. This Listeria welshimeri serovar 6b (strain ATCC 35897 / DSM 20650 / CCUG 15529 / CIP 8149 / NCTC 11857 / SLCC 5334 / V8) protein is Heme A synthase.